Consider the following 333-residue polypeptide: MKKSTKLLAGIVTLASAMTLAACQSTNDNTSVITMKGDTISVSDFYNETKNTEVSQRAMLNLVVSRVFEDQYGKKVSKKKTEEAYNKSAEQYGASFSAALAQSGLTTDTYKRQIRSAMLVEYAVKEAAKKELTDADYKKAYESYTPEMTTQVITLDNEETAKAILGEVKAEGADFAAIAKEKTTAADKKVDYKFDSGDTKLPADVIKAASGLKEGDISEVVSVLDPATYQNKFYIVKVTKKAEKASDWKKYKKRLKEIVLAEKTQNIDFQNKVIAKALDKANVKIKDQAFANILAQYANTDKKASKANTSKSDQKTSSDSSKDSQSSKSKSEK.

An N-terminal signal peptide occupies residues 1-22 (MKKSTKLLAGIVTLASAMTLAA). Residue C23 is the site of N-palmitoyl cysteine attachment. The S-diacylglycerol cysteine moiety is linked to residue C23. Residues 145–240 (TPEMTTQVIT…NKFYIVKVTK (96 aa)) enclose the PpiC domain. The segment at 301–333 (DKKASKANTSKSDQKTSSDSSKDSQSSKSKSEK) is disordered. A compositionally biased stretch (basic and acidic residues) spans 312 to 322 (SDQKTSSDSSK). Low complexity predominate over residues 323–333 (DSQSSKSKSEK).

This sequence belongs to the PrsA family.

The protein localises to the cell membrane. It catalyses the reaction [protein]-peptidylproline (omega=180) = [protein]-peptidylproline (omega=0). In terms of biological role, plays a major role in protein secretion by helping the post-translocational extracellular folding of several secreted proteins. The sequence is that of Foldase protein PrsA from Streptococcus equi subsp. zooepidemicus (strain H70).